The sequence spans 314 residues: Ribosomal RNA large subunit methyltransferase F (314 aa).

It belongs to the methyltransferase superfamily. METTL16/RlmF family.

Its subcellular location is the cytoplasm. It carries out the reaction adenosine(1618) in 23S rRNA + S-adenosyl-L-methionine = N(6)-methyladenosine(1618) in 23S rRNA + S-adenosyl-L-homocysteine + H(+). Functionally, specifically methylates the adenine in position 1618 of 23S rRNA. The polypeptide is Ribosomal RNA large subunit methyltransferase F (Flavobacterium psychrophilum (strain ATCC 49511 / DSM 21280 / CIP 103535 / JIP02/86)).